Consider the following 144-residue polypeptide: MFFGTYTPKLDDKGRLTLPAKFRDALAGGLMVTKSQDHSLAVHPRAEFEEMIAEISAKAKRGNPQARAYLRNLAASTDEQYPDAQGRITLSAEHRRYANLTKECVVTGSIGFLEIWDAQAWQDYQELHEENFSAASDEALGDIL.

2 consecutive SpoVT-AbrB domains span residues 5 to 47 (TYTP…PRAE) and 77 to 120 (TDEQ…DAQA).

The protein belongs to the MraZ family. In terms of assembly, forms oligomers.

It is found in the cytoplasm. Its subcellular location is the nucleoid. This chain is Transcriptional regulator MraZ, found in Mycolicibacterium vanbaalenii (strain DSM 7251 / JCM 13017 / BCRC 16820 / KCTC 9966 / NRRL B-24157 / PYR-1) (Mycobacterium vanbaalenii).